The primary structure comprises 777 residues: uncharacterized protein (777 aa).

8 disordered regions span residues Met1–Asn101, Ser128–Asn150, His219–Asn267, Ser334–Asp366, Ile391–Ser466, Lys529–Gly577, Leu590–Ile622, and Glu713–Pro751. Composition is skewed to low complexity over residues Ser128 to Asn147 and Asn243 to Asn265. A compositionally biased stretch (polar residues) spans Ser334–Asn343. Residues Asn344–Asp366 show a composition bias toward acidic residues. Residues Ile391 to Lys407 are compositionally biased toward polar residues. 2 stretches are compositionally biased toward low complexity: residues Asn408–Ser466 and Asn532–Asn574. A compositionally biased stretch (basic and acidic residues) spans Glu597–Glu606. Acidic residues-rich tracts occupy residues Glu607–Ser620 and Asp718–Ser730. Residues Asp731–Asp740 show a composition bias toward low complexity.

This is an uncharacterized protein from Dictyostelium discoideum (Social amoeba).